Reading from the N-terminus, the 217-residue chain is 3-demethoxyubiquinol 3-hydroxylase (217 aa).

Glu-66, Glu-96, His-99, Glu-148, Glu-180, and His-183 together coordinate Fe cation.

The protein belongs to the COQ7 family. Fe cation is required as a cofactor.

The protein localises to the cell membrane. The enzyme catalyses a 5-methoxy-2-methyl-3-(all-trans-polyprenyl)benzene-1,4-diol + AH2 + O2 = a 3-demethylubiquinol + A + H2O. It participates in cofactor biosynthesis; ubiquinone biosynthesis. In terms of biological role, catalyzes the hydroxylation of 2-nonaprenyl-3-methyl-6-methoxy-1,4-benzoquinol during ubiquinone biosynthesis. The sequence is that of 3-demethoxyubiquinol 3-hydroxylase from Ralstonia pickettii (strain 12J).